The following is a 386-amino-acid chain: Homoserine O-succinyltransferase (386 aa).

The 310-residue stretch at 49–358 (NAILICHALS…DAEQGHDSFL (310 aa)) folds into the AB hydrolase-1 domain. S156 functions as the Nucleophile in the catalytic mechanism. Position 226 (R226) interacts with substrate. Active-site residues include D321 and H354. D355 contributes to the substrate binding site.

It belongs to the AB hydrolase superfamily. MetX family. In terms of assembly, homodimer.

The protein localises to the cytoplasm. The catalysed reaction is L-homoserine + succinyl-CoA = O-succinyl-L-homoserine + CoA. The protein operates within amino-acid biosynthesis; L-methionine biosynthesis via de novo pathway; O-succinyl-L-homoserine from L-homoserine: step 1/1. Functionally, transfers a succinyl group from succinyl-CoA to L-homoserine, forming succinyl-L-homoserine. The sequence is that of Homoserine O-succinyltransferase from Acinetobacter baumannii (strain AB307-0294).